The chain runs to 60 residues: Putative transmembrane protein 74 (60 aa).

The next 2 helical transmembrane spans lie at 4–24 (FSVI…FLTF) and 35–55 (WVYI…YQAG).

The protein resides in the host membrane. The polypeptide is Putative transmembrane protein 74 (SIFV0074) (Sulfolobus islandicus filamentous virus (isolate Iceland/Hveragerdi) (SIFV)).